The primary structure comprises 93 residues: Sm-like protein LSM2 (93 aa).

The 75-residue stretch at 2 to 76 (LFFSYFKDLV…VRYVQLPKDG (75 aa)) folds into the Sm domain.

The protein belongs to the snRNP Sm proteins family. Component of the heptameric LSM1-LSM7 complex that forms a seven-membered ring structure with a donut shape. The LSM subunits are arranged in the order LSM1, LSM2, LSM3, LSM6, LSM5, LSM7 and LSM4. LSM2 subunit interacts only with its two neighboring subunits, LSM1A or LSM1B and LSM3A or LSM3B. Component of the heptameric LSM2-LSM8 complex that forms a seven-membered ring structure with a donut shape. The LSM subunits are arranged in the order LSM8, LSM2, LSM3, LSM6, LSM5, LSM7 and LSM4. LSM2 subunit interacts only with its two neighboring subunits, LSM8 and LSM3A or LSM3B. Expressed in roots, leaves, stems, flowers and siliques.

The protein resides in the cytoplasm. It is found in the nucleus. Component of LSM protein complexes, which are involved in RNA processing. Component of the cytoplasmic LSM1-LSM7 complex which is involved in mRNA degradation by promoting decapping and leading to accurate 5'-3' mRNA decay. The cytoplasmic LSM1-LSM7 complex regulates developmental gene expression by the decapping of specific development-related transcripts. Component of the nuclear LSM2-LSM8 complex which is involved splicing nuclear mRNAs. LSM2-LSM8 binds directly to the U6 small nuclear RNAs (snRNAs) and is essential for accurate splicing of selected development-related mRNAs through the stabilization of the spliceosomal U6 snRNA. Plays a critical role in the regulation of development-related gene expression. The chain is Sm-like protein LSM2 from Arabidopsis thaliana (Mouse-ear cress).